Consider the following 880-residue polypeptide: DNA double-strand break repair Rad50 ATPase (880 aa).

Residues R12, 32–38, and Q138 each bind ATP; that span reads NGSGKSS. 2 coiled-coil regions span residues 225 to 336 and 391 to 744; these read GELE…VIKE and GEVI…QALN. One can recognise a Zinc-hook domain in the interval 397-494; it reads LESLEKERTE…NLRKLEIKLR (98 aa). Zn(2+)-binding residues include C442 and C445. 789–794 is a binding site for ATP; the sequence is FLSGGE.

Belongs to the SMC family. RAD50 subfamily. Homodimer. Forms a heterotetramer composed of two Mre11 subunits and two Rad50 subunits. Zn(2+) serves as cofactor.

In terms of biological role, part of the Rad50/Mre11 complex, which is involved in the early steps of DNA double-strand break (DSB) repair. The complex may facilitate opening of the processed DNA ends to aid in the recruitment of HerA and NurA. Rad50 controls the balance between DNA end bridging and DNA resection via ATP-dependent structural rearrangements of the Rad50/Mre11 complex. In Pyrococcus abyssi (strain GE5 / Orsay), this protein is DNA double-strand break repair Rad50 ATPase.